Consider the following 406-residue polypeptide: LIM/homeobox protein Lhx1 (406 aa).

LIM zinc-binding domains lie at 4 to 54 and 63 to 117; these read CAGC…CKND and CAGC…CKED. A compositionally biased stretch (polar residues) spans 125–136; it reads AKENSLHSATTG. 2 disordered regions span residues 125-187 and 296-372; these read AKEN…RTTI and FPQG…SAEV. Over residues 137–148 the composition is skewed to low complexity; that stretch reads SDPSLSPDSQDP. Residues 151 to 167 show a composition bias toward basic and acidic residues; the sequence is DDAKDSESANVSDKETG. The segment at residues 180–239 is a DNA-binding region (homeobox); the sequence is RRGPRTTIKAKQLETLKAAFAATPKPTRHIREQLAQETGLNMRVIQVWFQNRRSKERRMK.

The protein resides in the nucleus. Its function is as follows. Transcriptional factor that defines subclasses of motoneurons that segregate into columns in the spinal cord and select distinct axon pathways. Acts in conjunction with ISL-2. This Gallus gallus (Chicken) protein is LIM/homeobox protein Lhx1 (LHX1).